The following is a 250-amino-acid chain: Homeobox protein Dlx4a (250 aa).

Residues 123–182 (IRKPRTIYSSLQLQALNQRFQQTQYLALPERADLAAKLGLTQTQVKIWFQNKRSKYKKIM) constitute a DNA-binding region (homeobox). Residues 182-202 (MKHGSSGPEGEHLQAASASGA) form a disordered region.

This sequence belongs to the distal-less homeobox family.

The protein resides in the nucleus. The polypeptide is Homeobox protein Dlx4a (dlx4a) (Danio rerio (Zebrafish)).